The following is a 111-amino-acid chain: Small ribosomal subunit protein bS16 (111 aa).

The protein belongs to the bacterial ribosomal protein bS16 family.

The polypeptide is Small ribosomal subunit protein bS16 (Rickettsia typhi (strain ATCC VR-144 / Wilmington)).